Consider the following 102-residue polypeptide: Phosphoribosyl-ATP pyrophosphatase (102 aa).

Belongs to the PRA-PH family.

The protein resides in the cytoplasm. It catalyses the reaction 1-(5-phospho-beta-D-ribosyl)-ATP + H2O = 1-(5-phospho-beta-D-ribosyl)-5'-AMP + diphosphate + H(+). It functions in the pathway amino-acid biosynthesis; L-histidine biosynthesis; L-histidine from 5-phospho-alpha-D-ribose 1-diphosphate: step 2/9. The sequence is that of Phosphoribosyl-ATP pyrophosphatase from Ignicoccus hospitalis (strain KIN4/I / DSM 18386 / JCM 14125).